The following is a 439-amino-acid chain: Xylose isomerase (439 aa).

Residues histidine 103 and aspartate 106 contribute to the active site. The Mg(2+) site is built by glutamate 234, glutamate 270, histidine 273, aspartate 298, aspartate 309, aspartate 311, and aspartate 341.

This sequence belongs to the xylose isomerase family. In terms of assembly, homotetramer. Mg(2+) is required as a cofactor.

Its subcellular location is the cytoplasm. The catalysed reaction is alpha-D-xylose = alpha-D-xylulofuranose. In Bacteroides fragilis (strain YCH46), this protein is Xylose isomerase.